The chain runs to 366 residues: tRNA-specific 2-thiouridylase MnmA (366 aa).

ATP is bound by residues 6–13 (AMSGGVDS) and Leu32. The active-site Nucleophile is Cys101. Cys101 and Cys199 form a disulfide bridge. Gly125 provides a ligand contact to ATP. Residues 149–151 (KDQ) form an interaction with tRNA region. The Cysteine persulfide intermediate role is filled by Cys199.

Belongs to the MnmA/TRMU family.

The protein localises to the cytoplasm. It catalyses the reaction S-sulfanyl-L-cysteinyl-[protein] + uridine(34) in tRNA + AH2 + ATP = 2-thiouridine(34) in tRNA + L-cysteinyl-[protein] + A + AMP + diphosphate + H(+). Catalyzes the 2-thiolation of uridine at the wobble position (U34) of tRNA, leading to the formation of s(2)U34. The protein is tRNA-specific 2-thiouridylase MnmA of Corynebacterium diphtheriae (strain ATCC 700971 / NCTC 13129 / Biotype gravis).